We begin with the raw amino-acid sequence, 284 residues long: Small ribosomal subunit protein uS5 (284 aa).

The span at 1–10 shows a compositional bias: basic and acidic residues; the sequence is MMADEKKTPE. The segment at 1 to 105 is disordered; that stretch reads MMADEKKTPE…DNRRGGRREE (105 aa). The segment covering 14-23 has biased composition (low complexity); that stretch reads ETATPAVAVE. Residues 24–43 are compositionally biased toward basic and acidic residues; it reads DALKAEPTETLEAQKAKAEA. Low complexity predominate over residues 44–67; that stretch reads ETPAVAETPSEAAANQSAAQGAEG. The span at 68-105 shows a compositional bias: basic and acidic residues; sequence QPRERGGHDRGGRGGRGGNDRGRGRGGRDNRRGGRREE. In terms of domain architecture, S5 DRBM spans 110 to 173; sequence IIEKLVHINR…AAARKKMIRV (64 aa). Residues 246–284 are disordered; the sequence is DQTSPKSVAQRRGKKVADLLGRGGASEAEAEADAAAIAE.

The protein belongs to the universal ribosomal protein uS5 family. As to quaternary structure, part of the 30S ribosomal subunit. Contacts proteins S4 and S8.

In terms of biological role, with S4 and S12 plays an important role in translational accuracy. Its function is as follows. Located at the back of the 30S subunit body where it stabilizes the conformation of the head with respect to the body. In Erythrobacter litoralis (strain HTCC2594), this protein is Small ribosomal subunit protein uS5.